A 301-amino-acid chain; its full sequence is Nitric oxide synthase-interacting protein (301 aa).

Serine 36 bears the Phosphoserine mark. Residues 55–75 form a U-box-like region; it reads DPVVTPDGYLYEREAILEYIL. Positions 78–101 match the Nuclear localization signal motif; sequence KREIARQVKAYEKQRGARREEQKE. A disordered region spans residues 131-154; the sequence is PKAATLPNTEGEQPGPSVGPVGKD.

This sequence belongs to the NOSIP family. In terms of assembly, interacts with NOS1 and NOS3. Interacts with PP2A holoenzyme, containing PPP2CA, PPP2CB, PPP2R1A and PPP2R2A subunits.

It is found in the cytoplasm. It localises to the nucleus. It carries out the reaction S-ubiquitinyl-[E2 ubiquitin-conjugating enzyme]-L-cysteine + [acceptor protein]-L-lysine = [E2 ubiquitin-conjugating enzyme]-L-cysteine + N(6)-ubiquitinyl-[acceptor protein]-L-lysine.. It functions in the pathway protein modification; protein ubiquitination. E3 ubiquitin-protein ligase that is essential for proper development of the forebrain, the eye and the face. Catalyzes monoubiquitination of serine/threonine-protein phosphatase 2A (PP2A) catalytic subunit PPP2CA/PPP2CB. Negatively regulates nitric oxide production by inducing NOS1 and NOS3 translocation to actin cytoskeleton and inhibiting their enzymatic activity. The chain is Nitric oxide synthase-interacting protein (Nosip) from Mus musculus (Mouse).